Reading from the N-terminus, the 226-residue chain is Phosphatidylserine decarboxylase proenzyme (226 aa).

The Schiff-base intermediate with substrate; via pyruvic acid role is filled by S184. Position 184 is a pyruvic acid (Ser); by autocatalysis (S184).

This sequence belongs to the phosphatidylserine decarboxylase family. PSD-A subfamily. As to quaternary structure, heterodimer of a large membrane-associated beta subunit and a small pyruvoyl-containing alpha subunit. It depends on pyruvate as a cofactor. Is synthesized initially as an inactive proenzyme. Formation of the active enzyme involves a self-maturation process in which the active site pyruvoyl group is generated from an internal serine residue via an autocatalytic post-translational modification. Two non-identical subunits are generated from the proenzyme in this reaction, and the pyruvate is formed at the N-terminus of the alpha chain, which is derived from the carboxyl end of the proenzyme. The post-translation cleavage follows an unusual pathway, termed non-hydrolytic serinolysis, in which the side chain hydroxyl group of the serine supplies its oxygen atom to form the C-terminus of the beta chain, while the remainder of the serine residue undergoes an oxidative deamination to produce ammonia and the pyruvoyl prosthetic group on the alpha chain.

The protein resides in the cell membrane. It catalyses the reaction a 1,2-diacyl-sn-glycero-3-phospho-L-serine + H(+) = a 1,2-diacyl-sn-glycero-3-phosphoethanolamine + CO2. The protein operates within phospholipid metabolism; phosphatidylethanolamine biosynthesis; phosphatidylethanolamine from CDP-diacylglycerol: step 2/2. Functionally, catalyzes the formation of phosphatidylethanolamine (PtdEtn) from phosphatidylserine (PtdSer). This Ehrlichia canis (strain Jake) protein is Phosphatidylserine decarboxylase proenzyme.